The following is a 432-amino-acid chain: Serine/threonine-protein kinase CDG1 (432 aa).

S-palmitoyl cysteine attachment occurs at residues C4 and C6. Residues 15–24 (LKDKSHKRSI) show a composition bias toward basic residues. The tract at residues 15 to 47 (LKDKSHKRSIRNQTSSSSAQPAGTAKEVDSSSS) is disordered. A compositionally biased stretch (polar residues) spans 25–35 (RNQTSSSSAQP). Phosphoserine occurs at positions 44 and 47. Residues 74–354 (FRNESLIGRG…SQVVECLKYI (281 aa)) form the Protein kinase domain. ATP-binding positions include 80–88 (IGRGGFGTV) and K102. Y147 is modified (phosphotyrosine). The active-site Proton acceptor is the D200. Residues S204 and S234 each carry the phosphoserine modification. T235 and T240 each carry phosphothreonine. Residue Y248 is modified to Phosphotyrosine.

This sequence belongs to the protein kinase superfamily. Ser/Thr protein kinase family. Interacts with BSU1, BSL1 and BRI1. Phosphorylated at Ser-44, Ser-47 and Ser-234 by BRI1. In terms of tissue distribution, expressed at high levels in the stamen and pollen grains. Expressed at a very low level in vegetative tissues.

The protein localises to the cell membrane. The catalysed reaction is L-seryl-[protein] + ATP = O-phospho-L-seryl-[protein] + ADP + H(+). The enzyme catalyses L-threonyl-[protein] + ATP = O-phospho-L-threonyl-[protein] + ADP + H(+). Activated by phosphorylation at Ser-234. Serine/threonine-protein kinase involved in the positive regulation of brassinosteroid (BR) signaling and plant growth. Mediates BR signal transduction from BRI1 receptor kinase to BSU1 phosphatase. After activation by phosphorylation at Ser-234 by BRI1, CDG1 phosphorylates BSU1 at 'Ser-764' in the phosphatase domain, increasing the ability of BSU1 to inactivate the negative regulator of BR signaling ASK7/BIN2 by dephosphorylation at 'Tyr-200'. The full kinase activity of CDG1 is required for its biological function. This chain is Serine/threonine-protein kinase CDG1, found in Arabidopsis thaliana (Mouse-ear cress).